We begin with the raw amino-acid sequence, 97 residues long: Putative membrane protein insertion efficiency factor (97 aa).

It belongs to the UPF0161 family.

The protein localises to the cell membrane. In terms of biological role, could be involved in insertion of integral membrane proteins into the membrane. The protein is Putative membrane protein insertion efficiency factor of Lactobacillus helveticus (strain DPC 4571).